Consider the following 964-residue polypeptide: Translation initiation factor IF-2 (964 aa).

Residues 105-119 show a composition bias toward low complexity; the sequence is AALAESEASEAAPVV. Disordered regions lie at residues 105–133 and 146–378; these read AALA…EHRR and KARQ…PTEP. Composition is skewed to basic and acidic residues over residues 123–133, 146–183, 197–253, and 266–278; these read EVARREEEHRR, KARQ…KAEE, EAPR…RAIR, and PAER…KKAE. Over residues 288 to 302 the composition is skewed to low complexity; the sequence is KPAGEARPAAAKKPA. Pro residues predominate over residues 303–313; it reads APAPAAAPAPG. Residues 464-633 form the tr-type G domain; it reads TRPPVVTVMG…LLQAEVLELK (170 aa). The interval 473 to 480 is G1; that stretch reads GHVDHGKT. 473–480 contributes to the GTP binding site; the sequence is GHVDHGKT. Positions 498–502 are G2; the sequence is GITQH. The interval 519-522 is G3; that stretch reads DTPG. GTP is bound by residues 519 to 523 and 573 to 576; these read DTPGH and TKVD. Residues 573 to 576 are G4; it reads TKVD. Residues 609–611 are G5; the sequence is SAK.

Belongs to the TRAFAC class translation factor GTPase superfamily. Classic translation factor GTPase family. IF-2 subfamily.

Its subcellular location is the cytoplasm. In terms of biological role, one of the essential components for the initiation of protein synthesis. Protects formylmethionyl-tRNA from spontaneous hydrolysis and promotes its binding to the 30S ribosomal subunits. Also involved in the hydrolysis of GTP during the formation of the 70S ribosomal complex. This is Translation initiation factor IF-2 from Ralstonia pickettii (strain 12J).